Reading from the N-terminus, the 1097-residue chain is MSLLATPMPQAATASSSSSASAAASASGIPITANNNLPFEKDKIWYFSNDQLANSPSRRCGIKGDDELQYRQMTAYLIQEMGQRLQVSQLCINTAIVYMHRFYAFHSFTHFHRNSMASASLFLAAKVEEQPRKLEHVIRAANKCLPPTTEQNYAELAQELVFNENVLLQTLGFDVAIDHPHTHVVRTCQLVKACKDLAQTSYFLASNSLHLTSMCLQYRPTVVACFCIYLACKWSRWEIPQSTEGKHWFYYVDKTVSLDLLKQLTDEFIAIYEKSPARLKSKLNSIKAIAQGASNRTANSKDKPKEDWKITEMMKGYHSNITTPPELLNGNDSRDRDRDRERERERERDPSSLLPPPAMVPQQRRQDGGHQRSSSVSGVPGSSSSSSSSSHKMPNYPGGMPPDAHTDHKSKQPGYNNRMPSSHQRSSSSGLGSSGSGSQRSSSSSSSSSQQPGRPSMPVDYHKSSRGMPPVGVGMPPHGSHKMTSGSKPQQPQQQPVPHPSASNSSASGMSSKDKSQSNKMYPNAPPPYSNSAPQNPLMSRGGYPGASNGSQPPPPAGYGGHRSKSGSTVHGMPPFEQQLPYSQSQSYGHMQQQPVPQSQQQQMPPEASQHSLQSKNSLFSPEWPDIKKEPMSQSQPQPFNGLLPPPAPPGHDYKLNSHPRDKESPKKERLTPTKKDKHRPVMPPVGSGNSSSGSGSSKPMLPPHKKQIPHGGDLLTNPGESGSLKRPNEISGSQYGLNKLDEIDNSNMPREKLRKLDTTTGLPTYPNYEEKHTPLNMSNGIETTPDLVRSLLKESLCPSNASLLKPDALTMPGLKPPAELLEPMPAPATIKKEQGITPMTSLASGPAPMDLEVPTKQAGEIKEESSSKSEKKKKKDKHKHKEKDKSKDKTEKEERKKHKKDKQKDRSGSGGSKDSSLPNEPLKMVIKNPNGSLQAGASAPIKLKISKNKVEPNNYSAAAGLPGAIGYGLPPTTATTTSASIGAAAPVLPPYGAGGGGYSSSGGSSSGGSSKKKHSDRDRDKESKKNKSQDYAKYNGAGGGIFNPLGGAGAAPNMSGGMGAPMSTAVPPSMLLAPTGAVPPSAAGLAPPPMPVYNKK.

Disordered stretches follow at residues 319–782, 804–936, and 985–1097; these read SNIT…SNGI, LLKP…SLQA, and AAPV…YNKK. The segment covering 332–350 has biased composition (basic and acidic residues); the sequence is DSRDRDRDRERERERERDP. Composition is skewed to low complexity over residues 373 to 390, 420 to 456, 467 to 478, and 489 to 511; these read SSSVSGVPGSSSSSSSSS, PSSHQRSSSSGLGSSGSGSQRSSSSSSSSSQQPGRPS, GMPPVGVGMPPH, and PQQPQQQPVPHPSASNSSASGMS. The segment covering 580-591 has biased composition (polar residues); the sequence is LPYSQSQSYGHM. Residues 592–606 show a composition bias toward low complexity; the sequence is QQQPVPQSQQQQMPP. The segment covering 609 to 620 has biased composition (polar residues); it reads SQHSLQSKNSLF. The segment covering 652–675 has biased composition (basic and acidic residues); sequence HDYKLNSHPRDKESPKKERLTPTK. Residues 687-698 are compositionally biased toward low complexity; it reads GSGNSSSGSGSS. Basic and acidic residues predominate over residues 860–870; sequence GEIKEESSSKS. Over residues 871 to 883 the composition is skewed to basic residues; sequence EKKKKKDKHKHKE. Residues 884 to 895 are compositionally biased toward basic and acidic residues; sequence KDKSKDKTEKEE. The residue at position 916 (Ser916) is a Phosphoserine. Over residues 993-1007 the composition is skewed to gly residues; sequence GAGGGGYSSSGGSSS. Residues 1016-1031 show a composition bias toward basic and acidic residues; it reads SDRDRDKESKKNKSQD. Over residues 1037 to 1050 the composition is skewed to gly residues; the sequence is GAGGGIFNPLGGAG. The segment covering 1087–1097 has biased composition (pro residues); that stretch reads APPPMPVYNKK.

Belongs to the cyclin family. Cyclin C subfamily. Component of the super elongation complex (SEC), at least composed of Ell, Cdk9, cyclin-T (CycT), lilli and ear. Associates with CDK9 to form P-TEFb.

Its subcellular location is the nucleus. Regulatory subunit of the cyclin-dependent kinase pair (CDK9/cyclin T) complex, also called positive transcription elongation factor B (P-TEFb), which is proposed to facilitate the transition from abortive to production elongation by phosphorylating the CTD (carboxy-terminal domain) of the large subunit of RNA polymerase II (RNAP II). The chain is Cyclin-T (CycT) from Drosophila melanogaster (Fruit fly).